The chain runs to 142 residues: Large ribosomal subunit protein uL13 (142 aa).

Belongs to the universal ribosomal protein uL13 family. In terms of assembly, part of the 50S ribosomal subunit.

In terms of biological role, this protein is one of the early assembly proteins of the 50S ribosomal subunit, although it is not seen to bind rRNA by itself. It is important during the early stages of 50S assembly. The protein is Large ribosomal subunit protein uL13 of Burkholderia cenocepacia (strain ATCC BAA-245 / DSM 16553 / LMG 16656 / NCTC 13227 / J2315 / CF5610) (Burkholderia cepacia (strain J2315)).